A 146-amino-acid polypeptide reads, in one-letter code: Large ribosomal subunit protein uL15 (146 aa).

The segment at 1–58 is disordered; sequence MNLSNLRAPKKANRNRKRVGRGMGSGHGKTSTRGHKGQRSRSGSRSMRGFEGGQMPLH. Basic residues-rich tracts occupy residues 8-20 and 30-39; these read APKK…KRVG and TSTRGHKGQR. Over residues 40–49 the composition is skewed to low complexity; it reads SRSGSRSMRG.

This sequence belongs to the universal ribosomal protein uL15 family. Part of the 50S ribosomal subunit.

Binds to the 23S rRNA. This Acidobacterium capsulatum (strain ATCC 51196 / DSM 11244 / BCRC 80197 / JCM 7670 / NBRC 15755 / NCIMB 13165 / 161) protein is Large ribosomal subunit protein uL15.